Consider the following 203-residue polypeptide: ATP-dependent Clp protease proteolytic subunit (203 aa).

The active-site Nucleophile is S107. H132 is a catalytic residue.

It belongs to the peptidase S14 family. As to quaternary structure, fourteen ClpP subunits assemble into 2 heptameric rings which stack back to back to give a disk-like structure with a central cavity, resembling the structure of eukaryotic proteasomes.

Its subcellular location is the cytoplasm. It catalyses the reaction Hydrolysis of proteins to small peptides in the presence of ATP and magnesium. alpha-casein is the usual test substrate. In the absence of ATP, only oligopeptides shorter than five residues are hydrolyzed (such as succinyl-Leu-Tyr-|-NHMec, and Leu-Tyr-Leu-|-Tyr-Trp, in which cleavage of the -Tyr-|-Leu- and -Tyr-|-Trp bonds also occurs).. Cleaves peptides in various proteins in a process that requires ATP hydrolysis. Has a chymotrypsin-like activity. Plays a major role in the degradation of misfolded proteins. This is ATP-dependent Clp protease proteolytic subunit from Shewanella pealeana (strain ATCC 700345 / ANG-SQ1).